A 336-amino-acid chain; its full sequence is Glyceraldehyde-3-phosphate dehydrogenase, plasmid (336 aa).

NAD(+)-binding positions include 12–13 (RI), Asp-37, Arg-81, and Ser-123. D-glyceraldehyde 3-phosphate is bound by residues 154 to 156 (SCT) and Thr-185. Catalysis depends on Cys-155, which acts as the Nucleophile. Asn-186 is a binding site for NAD(+). D-glyceraldehyde 3-phosphate is bound by residues Arg-200, 213–214 (TG), and Arg-236. Asn-317 serves as a coordination point for NAD(+).

Belongs to the glyceraldehyde-3-phosphate dehydrogenase family. Homotetramer.

It carries out the reaction D-glyceraldehyde 3-phosphate + phosphate + NAD(+) = (2R)-3-phospho-glyceroyl phosphate + NADH + H(+). It participates in carbohydrate biosynthesis; Calvin cycle. Functionally, could be involved in carbon fixation as a component of the Calvin cycle. Catalyzes the oxidative phosphorylation of glyceraldehyde 3-phosphate (G3P) to 1,3-bisphosphoglycerate (BPG) using the cofactor NAD. The first reaction step involves the formation of a hemiacetal intermediate between G3P and a cysteine residue, and this hemiacetal intermediate is then oxidized to a thioester, with concomitant reduction of NAD to NADH. The reduced NADH is then exchanged with the second NAD, and the thioester is attacked by a nucleophilic inorganic phosphate to produce BPG. The polypeptide is Glyceraldehyde-3-phosphate dehydrogenase, plasmid (cbbGP) (Cupriavidus necator (strain ATCC 17699 / DSM 428 / KCTC 22496 / NCIMB 10442 / H16 / Stanier 337) (Ralstonia eutropha)).